The sequence spans 416 residues: Casein kinase I isoform epsilon (416 aa).

Positions 9-277 constitute a Protein kinase domain; sequence YRLGRKIGSG…YLRQLFRNLF (269 aa). ATP-binding positions include 15–23 and Lys38; that span reads IGSGSFGDI. The Proton acceptor role is filled by Asp128. Residues 301–318 show a composition bias toward basic and acidic residues; the sequence is PEDMDRERREHEREERMG. Residues 301–416 are disordered; that stretch reads PEDMDRERRE…TSVPFDHLGK (116 aa). Positions 324–338 are enriched in low complexity; it reads ATRALPPGPPAGATG. Composition is skewed to polar residues over residues 350 to 365 and 400 to 409; these read STPT…TSPR and SRISASQTSV.

Belongs to the protein kinase superfamily. CK1 Ser/Thr protein kinase family. Casein kinase I subfamily. Monomer. Component of the circadian core oscillator, which includes the CRY proteins, CLOCK, or NPAS2, BMAL1 or BMAL2, CSNK1E, and the PER proteins.

It localises to the cytoplasm. It catalyses the reaction L-seryl-[protein] + ATP = O-phospho-L-seryl-[protein] + ADP + H(+). The catalysed reaction is L-threonyl-[protein] + ATP = O-phospho-L-threonyl-[protein] + ADP + H(+). Casein kinases are operationally defined by their preferential utilization of acidic proteins such as caseins as substrates. Can phosphorylate a large number of proteins. Participates in Wnt signaling. Phosphorylates DVL1. Central component of the circadian clock. May act as a negative regulator of circadian rhythmicity by phosphorylating PER1 and PER2. Retains PER1 in the cytoplasm. This Gallus gallus (Chicken) protein is Casein kinase I isoform epsilon (CSNK1E).